Reading from the N-terminus, the 201-residue chain is Peptide deformylase (201 aa).

The segment at 1-21 (MANHFSQLAKKSRTNGNAEKI) is disordered. The Fe cation site is built by cysteine 121 and histidine 163. Glutamate 164 is an active-site residue. Residue histidine 167 coordinates Fe cation.

It belongs to the polypeptide deformylase family. Fe(2+) is required as a cofactor.

The enzyme catalyses N-terminal N-formyl-L-methionyl-[peptide] + H2O = N-terminal L-methionyl-[peptide] + formate. Its function is as follows. Removes the formyl group from the N-terminal Met of newly synthesized proteins. Requires at least a dipeptide for an efficient rate of reaction. N-terminal L-methionine is a prerequisite for activity but the enzyme has broad specificity at other positions. The protein is Peptide deformylase of Prochlorococcus marinus (strain AS9601).